The chain runs to 213 residues: Kiwellin (213 aa).

The signal sequence occupies residues 1-24 (MAQLALLLLSLFLTLISLAPPGAS). 3 disulfide bridges follow: Cys28-Cys60, Cys32-Cys44, and Cys38-Cys49. A 4-hydroxyproline mark is found at Pro65 and Pro67. 4 disulfide bridges follow: Cys72–Cys90, Cys80–Cys172, Cys119–Cys144, and Cys166–Cys172. The segment at 91 to 121 (SPPVTSSTPAKLTNNDFSEGGDDGGPSECDE) is disordered. Residues 93 to 107 (PVTSSTPAKLTNNDF) are compositionally biased toward polar residues.

It belongs to the kiwellin family. Post-translationally, undergoes proteolytic cleavage by actinidin to produce kissper and KiTH. Three forms of KiTH are produced by cleavage at different sites, the main form produced in vivo is KiTH-1.

It localises to the secreted. PH-dependent, voltage-gated and anion-selective pore-forming peptide. In Actinidia deliciosa (Kiwi), this protein is Kiwellin.